Consider the following 330-residue polypeptide: MTLIVTGAAGFIGANIVKALNERGETRIIAVDNLTRADKFKNLVDCEIDDYLDKTEFVERFARSDFGKVRAVFHEGACSDTMETDGRYMMDNNFRYSRAVLDACLAQGTQFLYASSAAIYGGSSRFVEAREFEAPLNVYGYSKFLFDQVIRRVMPSAKSQIAGFRYFNVYGPRESHKGRMASVAFHNFNQFRAEGKVKLFGEYNGYGPGEQTRDFVSVEDVAKVNLHFFDHPQKSGIFNLGAGRAQPFNDIATTVVNTLRALEGQPALTLAEQVEQGLVEYVPFPDALRGKYQCFTQADQTKLRAAGYDAPFLTVQEGVDRYVRWLFGQL.

NADP(+)-binding positions include 11–12, 32–33, Lys39, Lys54, 75–79, and Asn92; these read FI, DN, and EGACS. Tyr139 functions as the Proton acceptor in the catalytic mechanism. Lys143 contributes to the NADP(+) binding site. Asn168 contributes to the substrate binding site. NADP(+) contacts are provided by Val169 and Lys177. Lys177 serves as the catalytic Proton acceptor. Residues Arg179, His186, 200–203, Arg213, and Tyr292 contribute to the substrate site; that span reads FGEY.

It belongs to the NAD(P)-dependent epimerase/dehydratase family. HldD subfamily. Homopentamer. It depends on NADP(+) as a cofactor.

The catalysed reaction is ADP-D-glycero-beta-D-manno-heptose = ADP-L-glycero-beta-D-manno-heptose. It functions in the pathway nucleotide-sugar biosynthesis; ADP-L-glycero-beta-D-manno-heptose biosynthesis; ADP-L-glycero-beta-D-manno-heptose from D-glycero-beta-D-manno-heptose 7-phosphate: step 4/4. Functionally, catalyzes the interconversion between ADP-D-glycero-beta-D-manno-heptose and ADP-L-glycero-beta-D-manno-heptose via an epimerization at carbon 6 of the heptose. The protein is ADP-L-glycero-D-manno-heptose-6-epimerase of Burkholderia pseudomallei (strain 1026b).